Here is a 399-residue protein sequence, read N- to C-terminus: UDP-N-acetylglucosamine--N-acetylmuramyl-(pentapeptide) pyrophosphoryl-undecaprenol N-acetylglucosamine transferase (399 aa).

Positions 1–21 (MTSRFGHSHHPRRGRSARARA) are enriched in basic residues. Positions 1-30 (MTSRFGHSHHPRRGRSARARAGRREGVQSN) are disordered. UDP-N-acetyl-alpha-D-glucosamine is bound by residues 58-60 (TGG), Asn170, Arg206, Ser234, Ile288, and Gln333.

The protein belongs to the glycosyltransferase 28 family. MurG subfamily.

The protein localises to the cell inner membrane. The catalysed reaction is di-trans,octa-cis-undecaprenyl diphospho-N-acetyl-alpha-D-muramoyl-L-alanyl-D-glutamyl-meso-2,6-diaminopimeloyl-D-alanyl-D-alanine + UDP-N-acetyl-alpha-D-glucosamine = di-trans,octa-cis-undecaprenyl diphospho-[N-acetyl-alpha-D-glucosaminyl-(1-&gt;4)]-N-acetyl-alpha-D-muramoyl-L-alanyl-D-glutamyl-meso-2,6-diaminopimeloyl-D-alanyl-D-alanine + UDP + H(+). Its pathway is cell wall biogenesis; peptidoglycan biosynthesis. Functionally, cell wall formation. Catalyzes the transfer of a GlcNAc subunit on undecaprenyl-pyrophosphoryl-MurNAc-pentapeptide (lipid intermediate I) to form undecaprenyl-pyrophosphoryl-MurNAc-(pentapeptide)GlcNAc (lipid intermediate II). The chain is UDP-N-acetylglucosamine--N-acetylmuramyl-(pentapeptide) pyrophosphoryl-undecaprenol N-acetylglucosamine transferase from Acidovorax ebreus (strain TPSY) (Diaphorobacter sp. (strain TPSY)).